The primary structure comprises 548 residues: Sesquiterpene synthase TPS1 (548 aa).

The (2E,6E)-farnesyl diphosphate site is built by arginine 264, aspartate 301, aspartate 305, arginine 442, and aspartate 445. 2 residues coordinate Mg(2+): aspartate 301 and aspartate 305. Residues 301–305 carry the DDXXD motif motif; it reads DDTYD. Mg(2+)-binding residues include aspartate 445 and glutamate 453.

The protein belongs to the terpene synthase family. Tpsa subfamily. As to quaternary structure, monomer. Requires Mg(2+) as cofactor. Expressed in leaves and stems.

The protein localises to the cytoplasm. The enzyme catalyses (2E,6E)-farnesyl diphosphate = germacrene D + diphosphate. It catalyses the reaction (2E,6E)-farnesyl diphosphate = (-)-(E)-beta-caryophyllene + diphosphate. It carries out the reaction (2E,6E)-farnesyl diphosphate = beta-copaene + diphosphate. It functions in the pathway secondary metabolite biosynthesis; terpenoid biosynthesis. Sesquiterpene synthase involved in the biosynthesis of volatile compounds. Mediates the conversion of (2E,6E)-farnesyl diphosphate (FPP) into germacrene D, (-)-(E)-beta-caryophyllene and beta-copaene. This chain is Sesquiterpene synthase TPS1, found in Xanthium strumarium (Rough cocklebur).